The sequence spans 119 residues: Flagellar transcriptional regulator FlhD (119 aa).

The protein belongs to the FlhD family. Homodimer; disulfide-linked. Forms a heterohexamer composed of two FlhC and four FlhD subunits. Each FlhC binds a FlhD dimer, forming a heterotrimer, and a hexamer assembles by dimerization of two heterotrimers.

The protein localises to the cytoplasm. Functionally, functions in complex with FlhC as a master transcriptional regulator that regulates transcription of several flagellar and non-flagellar operons by binding to their promoter region. Activates expression of class 2 flagellar genes, including fliA, which is a flagellum-specific sigma factor that turns on the class 3 genes. Also regulates genes whose products function in a variety of physiological pathways. The protein is Flagellar transcriptional regulator FlhD of Cronobacter sakazakii (strain ATCC BAA-894) (Enterobacter sakazakii).